Reading from the N-terminus, the 355-residue chain is Chemerin-like receptor 2 (355 aa).

At 1 to 41 (MEDLEETLFEEFENYSYALDYYSLESDLEEKVQLGVVHWVS) the chain is on the extracellular side. N-linked (GlcNAc...) asparagine glycosylation occurs at Asn14. Residues 42 to 62 (LVLYCLSFVLGIPGNAIVIWF) traverse the membrane as a helical segment. At 63–73 (TGFKWKRTVST) the chain is on the cytoplasmic side. The helical transmembrane segment at 74-94 (LWFLNLAIADFIFLLFLPLYI) threads the bilayer. The Extracellular portion of the chain corresponds to 95–112 (SYVVMNFHWPFGIWLCKA). Cys110 and Cys187 form a disulfide bridge. A helical membrane pass occupies residues 113–133 (NSFTAQLNMFASVFFLTVISL). Over 134–154 (DHYIHLIHPVLSHRHRTLKNS) the chain is Cytoplasmic. A helical transmembrane segment spans residues 155-175 (LIVIIFIWLLASLIGGPALYF). Residues 176 to 210 (RDTVEFNNHTLCYNNFQKHDPDLTVIRHHVLTWVK) lie on the Extracellular side of the membrane. The chain crosses the membrane as a helical span at residues 211 to 231 (YIVGYLFPLLTMSICYLCLIL). The Cytoplasmic portion of the chain corresponds to 232–247 (KVKKRSILISSRHFWT). A helical membrane pass occupies residues 248-268 (ILAVVVAFVVCWTPYHLFSIW). Over 269–286 (ELTIHHNSYSHHVMQAGI) the chain is Extracellular. Residues 287-307 (PLSTGLAFLNSCLNPILYVLI) traverse the membrane as a helical segment. The Cytoplasmic portion of the chain corresponds to 308 to 355 (SKKFQARFRSSVAEILKYTLWEVSCSGTVSEQLRNSETKNLCLLETAQ).

This sequence belongs to the chemokine-like receptor (CMKLR) family.

It localises to the cell membrane. Functionally, receptor for chemoattractant adipokine chemerin/RARRES2 suggesting a role for this receptor in the regulation of inflammation and energy homesotasis. Signals mainly via beta-arrestin pathway. Binding of RARRES2 activates weakly G proteins, calcium mobilization and MAPK1/MAPK3 (ERK1/2) phosphorylation too. Acts also as a receptor for TAFA1, mediates its effects on neuronal stem-cell proliferation and differentiation via the activation of ROCK/ERK and ROCK/STAT3 signaling pathway. This is Chemerin-like receptor 2 (CMKLR2) from Macaca fascicularis (Crab-eating macaque).